The following is a 103-amino-acid chain: Cell division protein FtsB (103 aa).

At 1–3 the chain is on the cytoplasmic side; the sequence is MGK. Residues 4–21 traverse the membrane as a helical segment; that stretch reads LTLLLLAILVWLQYSLWF. Residues 22–103 are Periplasmic-facing; it reads GKNGIHDYTR…RAQSAGQNNR (82 aa). Positions 31–71 form a coiled coil; that stretch reads RVNDDVAAQQATNAKLKARNDQLFAEIDDLNGGQEALEERA.

This sequence belongs to the FtsB family. As to quaternary structure, part of a complex composed of FtsB, FtsL and FtsQ.

The protein localises to the cell inner membrane. In terms of biological role, essential cell division protein. May link together the upstream cell division proteins, which are predominantly cytoplasmic, with the downstream cell division proteins, which are predominantly periplasmic. The protein is Cell division protein FtsB of Shigella boydii serotype 18 (strain CDC 3083-94 / BS512).